Consider the following 156-residue polypeptide: uncharacterized protein (156 aa).

A run of 2 helical transmembrane segments spans residues 46–66 (GLVL…AGVV) and 114–134 (IIDI…IVAL).

The protein localises to the cell membrane. This is an uncharacterized protein from Haemophilus influenzae (strain ATCC 51907 / DSM 11121 / KW20 / Rd).